The following is a 446-amino-acid chain: MREIVHIQTGQCGNQIGAKFWEVVSDEHGIERDGLYKGTNDMQLERISVYYNEIGSNKYVPRAVLVDLEPGTMDSVRSGPLGGLFRPDNFIFGQSGAGNNWAKGHYTEGAELVDSVLDVVRKEAEGTDCLQGFQITHSLGGGTGAGMGTLLMSKIREEYPDRMMCTYSVVPSPAVSDTVVEPYNATLSVHQLVENSDETFCIDNEALYDICFRTLKLSTPTYGDLNHLVSFVMSGITTCLRFPGQLNSDLRKLAVNMVPFPRLHFFMTGFAPLTARGSQQYRAVTVPELTQQMFDAKNMMAASDPRHGRYLTVAAVFRGKVSMKEVEEQMQNVQNKNSAYFVEWIPNNVLSAQCDIPPRGVKMAVTFLGNSTAIQELFKRVSDHFTAMFKRKAFLHWYTQEGMDEMEFTEAESNMQDLIAEYQQYQDATVEEEAEYEEEVPADEES.

GTP contacts are provided by Q11, E69, S138, G142, T143, G144, N204, and N226. Position 69 (E69) interacts with Mg(2+).

The protein belongs to the tubulin family. In terms of assembly, dimer of alpha and beta chains. A typical microtubule is a hollow water-filled tube with an outer diameter of 25 nm and an inner diameter of 15 nM. Alpha-beta heterodimers associate head-to-tail to form protofilaments running lengthwise along the microtubule wall with the beta-tubulin subunit facing the microtubule plus end conferring a structural polarity. Microtubules usually have 13 protofilaments but different protofilament numbers can be found in some organisms and specialized cells. Mg(2+) serves as cofactor.

It localises to the cytoplasm. It is found in the cytoskeleton. In terms of biological role, tubulin is the major constituent of microtubules, a cylinder consisting of laterally associated linear protofilaments composed of alpha- and beta-tubulin heterodimers. Microtubules grow by the addition of GTP-tubulin dimers to the microtubule end, where a stabilizing cap forms. Below the cap, tubulin dimers are in GDP-bound state, owing to GTPase activity of alpha-tubulin. The chain is Tubulin beta-1 chain (TUBB1) from Suillus bovinus (Jersey cow bolete).